Consider the following 937-residue polypeptide: Translation initiation factor IF-2 (937 aa).

Positions Arg47–Leu352 are disordered. Positions Thr52 to Lys68 are enriched in low complexity. The span at Gln97–Gly116 shows a compositional bias: polar residues. The segment covering Gln117–Ser153 has biased composition (low complexity). Over residues Ala154–Ala169 the composition is skewed to polar residues. A compositionally biased stretch (basic and acidic residues) spans Arg173–Asn197. A compositionally biased stretch (polar residues) spans Thr202 to Pro229. Positions Ser240–Arg269 are enriched in low complexity. Residues Gln274–Lys298 are compositionally biased toward polar residues. Positions Phe322–Lys331 are enriched in basic residues. The segment covering Ala339–Leu352 has biased composition (basic and acidic residues). The region spanning Ser438–Lys607 is the tr-type G domain. The interval Gly447–Thr454 is G1. A GTP-binding site is contributed by Gly447–Thr454. Positions Gly472–His476 are G2. The segment at Asp493 to Gly496 is G3. GTP-binding positions include Asp493 to His497 and Asn547 to Asp550. Residues Asn547–Asp550 form a G4 region. Residues Ser583–Lys585 form a G5 region.

It belongs to the TRAFAC class translation factor GTPase superfamily. Classic translation factor GTPase family. IF-2 subfamily.

It is found in the cytoplasm. Its function is as follows. One of the essential components for the initiation of protein synthesis. Protects formylmethionyl-tRNA from spontaneous hydrolysis and promotes its binding to the 30S ribosomal subunits. Also involved in the hydrolysis of GTP during the formation of the 70S ribosomal complex. The protein is Translation initiation factor IF-2 of Latilactobacillus sakei subsp. sakei (strain 23K) (Lactobacillus sakei subsp. sakei).